We begin with the raw amino-acid sequence, 431 residues long: Gamma-glutamyl phosphate reductase (431 aa).

The protein belongs to the gamma-glutamyl phosphate reductase family.

Its subcellular location is the cytoplasm. The catalysed reaction is L-glutamate 5-semialdehyde + phosphate + NADP(+) = L-glutamyl 5-phosphate + NADPH + H(+). It participates in amino-acid biosynthesis; L-proline biosynthesis; L-glutamate 5-semialdehyde from L-glutamate: step 2/2. In terms of biological role, catalyzes the NADPH-dependent reduction of L-glutamate 5-phosphate into L-glutamate 5-semialdehyde and phosphate. The product spontaneously undergoes cyclization to form 1-pyrroline-5-carboxylate. This is Gamma-glutamyl phosphate reductase from Synechococcus elongatus (strain ATCC 33912 / PCC 7942 / FACHB-805) (Anacystis nidulans R2).